We begin with the raw amino-acid sequence, 456 residues long: PTS system sucrose-specific EIIBC component (456 aa).

The 84-residue stretch at 4–87 (EQISRSLLPL…IQAAGISESS (84 aa)) folds into the PTS EIIB type-1 domain. The active-site Phosphocysteine intermediate; for EIIB activity is the C26. One can recognise a PTS EIIC type-1 domain in the interval 107-456 (RLLSNIFVPI…LTLKYKTDAE (350 aa)). Helical transmembrane passes span 112–132 (IFVP…LLGM), 144–164 (ALYI…PILI), 181–201 (TLGG…AAGF), 209–229 (IEVA…AVWF), 247–267 (LILT…LLIG), 288–308 (AGWL…ITGI), 329–349 (FLLP…FAVW), 360–380 (ITLP…IFGI), 388–408 (FIAA…MHVY), and 428–448 (LLNY…LSLT).

It is found in the cell inner membrane. The enzyme catalyses N(pros)-phospho-L-histidyl-[protein](out) + sucrose = sucrose 6(G)-phosphate(in) + L-histidyl-[protein]. Functionally, the phosphoenolpyruvate-dependent sugar phosphotransferase system (sugar PTS), a major carbohydrate active transport system, catalyzes the phosphorylation of incoming sugar substrates concomitantly with their translocation across the cell membrane. This system is involved in sucrose transport. This Klebsiella pneumoniae protein is PTS system sucrose-specific EIIBC component.